The primary structure comprises 184 residues: Autophagy-related protein 101 (184 aa).

Belongs to the ATG101 family. Component of the atg1 kinase complex composed of at least atg1, atg13, atg17 and atg101. Interacts directly with atg13.

The protein localises to the cytoplasm. It is found in the nucleus. It localises to the preautophagosomal structure membrane. Functionally, autophagy factor required for autophagosome formation. Component of the atg1 kinase complex in which it stabilizes atg13. Is also responsible for recruiting downstream factors to the autophagosome-formation site. Has a role in meiosis and sporulation. The protein is Autophagy-related protein 101 of Schizosaccharomyces pombe (strain 972 / ATCC 24843) (Fission yeast).